The sequence spans 91 residues: Alpha-elapitoxin-Oh2b (91 aa).

Positions Met1–Thr21 are cleaved as a signal peptide. 5 disulfides stabilise this stretch: Cys24/Cys41, Cys34/Cys62, Cys47/Cys51, Cys66/Cys77, and Cys78/Cys83.

Belongs to the three-finger toxin family. Long-chain subfamily. Type II alpha-neurotoxin sub-subfamily. As to quaternary structure, monomer. Expressed by the venom gland.

The protein resides in the secreted. Its function is as follows. Binds with high affinity to muscular (alpha-1/CHRNA1) and neuronal (alpha-7/CHRNA7) nicotinic acetylcholine receptor (nAChR) and inhibits acetylcholine from binding to the receptor, thereby impairing neuromuscular and neuronal transmission. Recombinant LNTX1 leads to a functional block of the muscle-type acetylcholine receptors. Has a cytotoxic activity. This neurotoxin is lethal. This Ophiophagus hannah (King cobra) protein is Alpha-elapitoxin-Oh2b.